A 400-amino-acid polypeptide reads, in one-letter code: Multidrug resistance protein MdtH (400 aa).

Residues 1–12 are Cytoplasmic-facing; sequence MSRVSQARNLGK. The helical transmembrane segment at 13–33 threads the bilayer; it reads YFLLIDNMLVVLGFFVVFPLI. Topologically, residues 34-98 are periplasmic; it reads SIRFVDQMGW…GFATMGIAHE (65 aa). Residues 99–116 form a helical membrane-spanning segment; the sequence is PWLLWFSCLLSGLGGTLF. The Cytoplasmic segment spans residues 117 to 138; it reads DPPRSALVVKLIRPQQRGRFFS. The helical transmembrane segment at 139–159 threads the bilayer; sequence LLMMQDSAGAVIGALLGSWLL. Over 160 to 164 the chain is Periplasmic; the sequence is QYDFR. The helical transmembrane segment at 165–185 threads the bilayer; sequence LVCATGAVLFVLCAAFNAWLL. At 186–213 the chain is on the cytoplasmic side; the sequence is PAWKLSTVRTPVREGMTRVMRDKRFVTY. Residues 214–232 traverse the membrane as a helical segment; that stretch reads VLTLAGYYMLAVQVMLPIM. At 233–241 the chain is on the periplasmic side; it reads VNDVAGAPS. A helical membrane pass occupies residues 242–262; it reads AVKWMYAIEACLSLTLLYPIA. Over 263–274 the chain is Cytoplasmic; it reads RWSEKHFRLEHR. A helical membrane pass occupies residues 275–295; sequence LMAGLLIMSLSMMPVGMVSGL. Topologically, residues 296-297 are periplasmic; that stretch reads QQ. A helical membrane pass occupies residues 298–318; the sequence is LFTLICLFYIGSIIAEPARET. The Cytoplasmic segment spans residues 319–337; the sequence is LSASLADARARGSYMGFSR. The chain crosses the membrane as a helical span at residues 338–358; sequence LGLAIGGAIGYIGGGWLFDLG. Topologically, residues 359 to 365 are periplasmic; sequence KSAHQPE. Residues 366-386 traverse the membrane as a helical segment; the sequence is LPWMMLGIIGIFTFLALGWQF. The Cytoplasmic segment spans residues 387-400; it reads SQKRAARRLLERDA.

Belongs to the major facilitator superfamily. DHA1 family. MdtH (TC 2.A.1.2.21) subfamily.

The protein resides in the cell inner membrane. The chain is Multidrug resistance protein MdtH from Shigella boydii serotype 4 (strain Sb227).